A 161-amino-acid chain; its full sequence is SsrA-binding protein (161 aa).

Belongs to the SmpB family.

The protein localises to the cytoplasm. Its function is as follows. Required for rescue of stalled ribosomes mediated by trans-translation. Binds to transfer-messenger RNA (tmRNA), required for stable association of tmRNA with ribosomes. tmRNA and SmpB together mimic tRNA shape, replacing the anticodon stem-loop with SmpB. tmRNA is encoded by the ssrA gene; the 2 termini fold to resemble tRNA(Ala) and it encodes a 'tag peptide', a short internal open reading frame. During trans-translation Ala-aminoacylated tmRNA acts like a tRNA, entering the A-site of stalled ribosomes, displacing the stalled mRNA. The ribosome then switches to translate the ORF on the tmRNA; the nascent peptide is terminated with the 'tag peptide' encoded by the tmRNA and targeted for degradation. The ribosome is freed to recommence translation, which seems to be the essential function of trans-translation. This is SsrA-binding protein from Vesicomyosocius okutanii subsp. Calyptogena okutanii (strain HA).